The chain runs to 385 residues: Flap endonuclease 1 (385 aa).

The interval 1 to 104 is N-domain; it reads MGILGLSKLI…GELAKRAERR (104 aa). Aspartate 34 is a Mg(2+) binding site. Positions 47 and 70 each coordinate DNA. Positions 86, 158, 160, 179, and 181 each coordinate Mg(2+). Positions 122-253 are I-domain; sequence GIEKFNRRLV…KRAIELINTY (132 aa). Residue glutamate 158 coordinates DNA. 2 residues coordinate DNA: glycine 231 and aspartate 233. Residue aspartate 233 participates in Mg(2+) binding. The interaction with PCNA stretch occupies residues 336–344; that stretch reads TQVRLDSFF. Residues 346 to 385 are disordered; the sequence is TLPSTPNATNAAKRKAEEAKKSANNKKAKTSGGGRGRRPK. Over residues 368-385 the composition is skewed to basic residues; sequence ANNKKAKTSGGGRGRRPK.

It belongs to the XPG/RAD2 endonuclease family. FEN1 subfamily. In terms of assembly, interacts with PCNA. Three molecules of FEN1 bind to one PCNA trimer with each molecule binding to one PCNA monomer. PCNA stimulates the nuclease activity without altering cleavage specificity. It depends on Mg(2+) as a cofactor. In terms of processing, phosphorylated. Phosphorylation upon DNA damage induces relocalization to the nuclear plasma.

The protein resides in the nucleus. It is found in the nucleolus. The protein localises to the nucleoplasm. It localises to the mitochondrion. In terms of biological role, structure-specific nuclease with 5'-flap endonuclease and 5'-3' exonuclease activities involved in DNA replication and repair. During DNA replication, cleaves the 5'-overhanging flap structure that is generated by displacement synthesis when DNA polymerase encounters the 5'-end of a downstream Okazaki fragment. It enters the flap from the 5'-end and then tracks to cleave the flap base, leaving a nick for ligation. Also involved in the long patch base excision repair (LP-BER) pathway, by cleaving within the apurinic/apyrimidinic (AP) site-terminated flap. Acts as a genome stabilization factor that prevents flaps from equilibrating into structures that lead to duplications and deletions. Also possesses 5'-3' exonuclease activity on nicked or gapped double-stranded DNA, and exhibits RNase H activity. Also involved in replication and repair of rDNA and in repairing mitochondrial DNA. This is Flap endonuclease 1 from Drosophila simulans (Fruit fly).